We begin with the raw amino-acid sequence, 154 residues long: NADPH-dependent 7-cyano-7-deazaguanine reductase (154 aa).

A compositionally biased stretch (polar residues) spans methionine 1–glycine 13. Residues methionine 1 to valine 30 are disordered. Positions aspartate 17 to leucine 27 are enriched in basic and acidic residues. Catalysis depends on cysteine 52, which acts as the Thioimide intermediate. Aspartate 59 serves as the catalytic Proton donor. Substrate contacts are provided by residues valine 74–serine 76 and histidine 93–glutamate 94.

It belongs to the GTP cyclohydrolase I family. QueF type 1 subfamily.

It is found in the cytoplasm. The catalysed reaction is 7-aminomethyl-7-carbaguanine + 2 NADP(+) = 7-cyano-7-deazaguanine + 2 NADPH + 3 H(+). It participates in tRNA modification; tRNA-queuosine biosynthesis. In terms of biological role, catalyzes the NADPH-dependent reduction of 7-cyano-7-deazaguanine (preQ0) to 7-aminomethyl-7-deazaguanine (preQ1). The chain is NADPH-dependent 7-cyano-7-deazaguanine reductase from Agrobacterium fabrum (strain C58 / ATCC 33970) (Agrobacterium tumefaciens (strain C58)).